The chain runs to 202 residues: Peptide deformylase (202 aa).

A disordered region spans residues 1 to 24; sequence MAGSFAQLAKNAEKKKPSISVSKE. Fe cation is bound by residues Cys121 and His163. Glu164 is an active-site residue. His167 is a binding site for Fe cation.

The protein belongs to the polypeptide deformylase family. It depends on Fe(2+) as a cofactor.

The enzyme catalyses N-terminal N-formyl-L-methionyl-[peptide] + H2O = N-terminal L-methionyl-[peptide] + formate. Its function is as follows. Removes the formyl group from the N-terminal Met of newly synthesized proteins. Requires at least a dipeptide for an efficient rate of reaction. N-terminal L-methionine is a prerequisite for activity but the enzyme has broad specificity at other positions. This chain is Peptide deformylase, found in Prochlorococcus marinus (strain NATL1A).